Reading from the N-terminus, the 486-residue chain is UDP-N-acetylmuramate--L-alanine ligase (486 aa).

An ATP-binding site is contributed by 126–132 (GTHGKTT).

It belongs to the MurCDEF family.

It is found in the cytoplasm. The catalysed reaction is UDP-N-acetyl-alpha-D-muramate + L-alanine + ATP = UDP-N-acetyl-alpha-D-muramoyl-L-alanine + ADP + phosphate + H(+). The protein operates within cell wall biogenesis; peptidoglycan biosynthesis. Its function is as follows. Cell wall formation. The sequence is that of UDP-N-acetylmuramate--L-alanine ligase from Pectobacterium atrosepticum (strain SCRI 1043 / ATCC BAA-672) (Erwinia carotovora subsp. atroseptica).